The following is a 173-amino-acid chain: MAGSVNKVILIGNVGADPEIRRTQDGRPIANLRIATSETWRDRNSGERKEKTEWHTVVVFNEGLCKVVEQYVKKGAKLYIEGQLQTRKWQDQTGNDRYSTEIVLQGFNSTLTMLDGRGEGGGGRSGGGDFGGGNDYGSGGGYDQQSSPRGGSSRGGGQPSGGFSNDMDDDIPF.

Residues 5-111 enclose the SSB domain; it reads VNKVILIGNV…IVLQGFNSTL (107 aa). The segment at 114-173 is disordered; it reads LDGRGEGGGGRSGGGDFGGGNDYGSGGGYDQQSSPRGGSSRGGGQPSGGFSNDMDDDIPF. A compositionally biased stretch (gly residues) spans 119–142; sequence EGGGGRSGGGDFGGGNDYGSGGGY. Positions 168–173 match the Important for interaction with partner proteins motif; sequence DDDIPF.

In terms of assembly, homotetramer.

Functionally, plays an important role in DNA replication, recombination and repair. Binds to ssDNA and to an array of partner proteins to recruit them to their sites of action during DNA metabolism. The polypeptide is Single-stranded DNA-binding protein (ssb) (Agrobacterium fabrum (strain C58 / ATCC 33970) (Agrobacterium tumefaciens (strain C58))).